Reading from the N-terminus, the 387-residue chain is Cystathionine beta-lyase (387 aa).

Lysine 204 carries the N6-(pyridoxal phosphate)lysine modification.

The protein belongs to the trans-sulfuration enzymes family. As to quaternary structure, homotetramer. The cofactor is pyridoxal 5'-phosphate.

The protein resides in the cytoplasm. The catalysed reaction is L,L-cystathionine + H2O = L-homocysteine + pyruvate + NH4(+). It carries out the reaction an S-substituted L-cysteine + H2O = a thiol + pyruvate + NH4(+). Its pathway is amino-acid biosynthesis; L-methionine biosynthesis via de novo pathway; L-homocysteine from L-cystathionine: step 1/1. Functionally, catalyzes the cleavage of cystathionine to homocysteine, pyruvate and ammonia during methionine biosynthesis. The sequence is that of Cystathionine beta-lyase (metC) from Coxiella burnetii (strain RSA 493 / Nine Mile phase I).